The chain runs to 508 residues: UDP-N-acetylmuramoylalanine--D-glutamate ligase (508 aa).

138-144 (GTNGKTT) lines the ATP pocket. The disordered stretch occupies residues 294-314 (FDEPAPRRKKDAPPPTRAGGR).

It belongs to the MurCDEF family.

It localises to the cytoplasm. The enzyme catalyses UDP-N-acetyl-alpha-D-muramoyl-L-alanine + D-glutamate + ATP = UDP-N-acetyl-alpha-D-muramoyl-L-alanyl-D-glutamate + ADP + phosphate + H(+). Its pathway is cell wall biogenesis; peptidoglycan biosynthesis. In terms of biological role, cell wall formation. Catalyzes the addition of glutamate to the nucleotide precursor UDP-N-acetylmuramoyl-L-alanine (UMA). The chain is UDP-N-acetylmuramoylalanine--D-glutamate ligase from Bordetella parapertussis (strain 12822 / ATCC BAA-587 / NCTC 13253).